Here is a 290-residue protein sequence, read N- to C-terminus: 6-phospho-5-dehydro-2-deoxy-D-gluconate aldolase (290 aa).

D85 (proton donor) is an active-site residue. Zn(2+)-binding residues include H86 and H180. Residue G181 coordinates dihydroxyacetone phosphate. H208 serves as a coordination point for Zn(2+). Dihydroxyacetone phosphate contacts are provided by residues G209–S211 and N230–T233. T233 bears the Phosphothreonine mark.

Belongs to the class II fructose-bisphosphate aldolase family. IolJ subfamily. The cofactor is Zn(2+).

It carries out the reaction 6-phospho-5-dehydro-2-deoxy-D-gluconate = 3-oxopropanoate + dihydroxyacetone phosphate. It participates in polyol metabolism; myo-inositol degradation into acetyl-CoA; acetyl-CoA from myo-inositol: step 6/7. Produces dihydroxyacetone phosphate (DHAP or glycerone phosphate) and malonic semialdehyde (MSA or 3-oxopropanoate) from 6-phospho-5-dehydro-2-deoxy-D-gluconate (DKGP). This Bacillus subtilis (strain 168) protein is 6-phospho-5-dehydro-2-deoxy-D-gluconate aldolase (iolJ).